A 46-amino-acid chain; its full sequence is uncharacterized protein (46 aa).

This is an uncharacterized protein from Escherichia coli.